A 590-amino-acid chain; its full sequence is Phosphomethylpyrimidine synthase (590 aa).

Substrate is bound by residues N197, M226, Y255, H291, 311–313 (SRG), 352–355 (DGLR), and E391. Residue H395 coordinates Zn(2+). Y418 provides a ligand contact to substrate. H459 provides a ligand contact to Zn(2+). Positions 539, 542, and 547 each coordinate [4Fe-4S] cluster.

It belongs to the ThiC family. [4Fe-4S] cluster is required as a cofactor.

It catalyses the reaction 5-amino-1-(5-phospho-beta-D-ribosyl)imidazole + S-adenosyl-L-methionine = 4-amino-2-methyl-5-(phosphooxymethyl)pyrimidine + CO + 5'-deoxyadenosine + formate + L-methionine + 3 H(+). The protein operates within cofactor biosynthesis; thiamine diphosphate biosynthesis. In terms of biological role, catalyzes the synthesis of the hydroxymethylpyrimidine phosphate (HMP-P) moiety of thiamine from aminoimidazole ribotide (AIR) in a radical S-adenosyl-L-methionine (SAM)-dependent reaction. The polypeptide is Phosphomethylpyrimidine synthase (Bacillus velezensis (strain DSM 23117 / BGSC 10A6 / LMG 26770 / FZB42) (Bacillus amyloliquefaciens subsp. plantarum)).